Here is an 83-residue protein sequence, read N- to C-terminus: U5-theraphotoxin-Hs1a 1 (83 aa).

Residues 1-21 (MKTSMFLTLTGLGLLFVVCYA) form the signal peptide. Residues 22 to 49 (SESEEKEFPKELLSSIFAADSDFKVEER) constitute a propeptide that is removed on maturation. 3 disulfides stabilise this stretch: cysteine 51–cysteine 63, cysteine 56–cysteine 68, and cysteine 62–cysteine 75.

Belongs to the neurotoxin 10 (Hwtx-1) family. 51 (Hntx-8) subfamily. Hntx-8 sub-subfamily. As to expression, expressed by the venom gland.

It is found in the secreted. In terms of biological role, agglutinates human and mice erythrocytes. This activity can be specifically inhibited by mannosamine. This lectin shows very low toxicity in both mammals and insects. The protein is U5-theraphotoxin-Hs1a 1 of Cyriopagopus schmidti (Chinese bird spider).